The primary structure comprises 431 residues: Glutamyl-tRNA(Gln) amidotransferase subunit A (431 aa).

Active-site charge relay system residues include lysine 55 and serine 130. Catalysis depends on serine 154, which acts as the Acyl-ester intermediate.

The protein belongs to the amidase family. GatA subfamily. Heterotrimer of A, B and C subunits.

The catalysed reaction is L-glutamyl-tRNA(Gln) + L-glutamine + ATP + H2O = L-glutaminyl-tRNA(Gln) + L-glutamate + ADP + phosphate + H(+). In terms of biological role, allows the formation of correctly charged Gln-tRNA(Gln) through the transamidation of misacylated Glu-tRNA(Gln) in organisms which lack glutaminyl-tRNA synthetase. The reaction takes place in the presence of glutamine and ATP through an activated gamma-phospho-Glu-tRNA(Gln). This is Glutamyl-tRNA(Gln) amidotransferase subunit A from Methanococcus maripaludis (strain C6 / ATCC BAA-1332).